Consider the following 210-residue polypeptide: Transposable element activator uncharacterized 23 kDa protein (210 aa).

Over residues 67 to 78 the composition is skewed to basic and acidic residues; it reads SGRMGGPRRDGR. Positions 67–87 are disordered; it reads SGRMGGPRRDGRVASSGVEGG.

The polypeptide is Transposable element activator uncharacterized 23 kDa protein (Zea mays (Maize)).